Consider the following 141-residue polypeptide: Large ribosomal subunit protein uL16 (141 aa).

This sequence belongs to the universal ribosomal protein uL16 family. In terms of assembly, part of the 50S ribosomal subunit.

Its function is as follows. Binds 23S rRNA and is also seen to make contacts with the A and possibly P site tRNAs. The protein is Large ribosomal subunit protein uL16 of Rhodospirillum centenum (strain ATCC 51521 / SW).